An 893-amino-acid chain; its full sequence is UPF0182 protein CLK_3152 (893 aa).

The next 7 membrane-spanning stretches (helical) occupy residues 9-29 (IPLFIIILFIAFFNKIINFII), 49-69 (AIIILMIPIFIIFFISIWMYY), 94-114 (LFFIFNFIVSIFLAYIFSSSY), 154-174 (VIISLLLFLVITTFIAYFILE), 202-222 (LAIVSGLIILFISFGHLIKIW), 246-266 (FYKIIVVITLISSIVTLLSIV), and 273-293 (VSICIGITIFLIVSQNIASFL).

This sequence belongs to the UPF0182 family.

Its subcellular location is the cell membrane. This Clostridium botulinum (strain Loch Maree / Type A3) protein is UPF0182 protein CLK_3152.